The following is a 111-amino-acid chain: Ghrelin (111 aa).

The N-terminal stretch at 1-26 (MRQMKRTAYIILLVCVLALWMDSVQA) is a signal peptide. Residues 28–37 (SSFLSPSQRP) are compositionally biased toward polar residues. Residues 28–53 (SSFLSPSQRPQGKDKKPPRVGRRDSD) are disordered. The O-decanoyl serine; alternate moiety is linked to residue serine 29. Serine 29 carries O-hexanoyl serine; alternate lipidation. Serine 29 carries the O-octanoyl serine; alternate lipid modification. The segment covering 38-53 (QGKDKKPPRVGRRDSD) has biased composition (basic and acidic residues). Valine 47 is modified (valine amide). A propeptide spans 51–111 (DSDGILDLFM…DLLMDTPAKE (61 aa)) (removed in mature form).

It belongs to the motilin family. Post-translationally, O-octanoylated by GOAT/MBOAT4. O-octanoylation or O-decanoylation is essential for activity. The O-decanoylated form ghrelin-21-C10 differs in the length of the carbon backbone of the carboxylic acid forming an ester bond with Ser-29. 44% of eel ghrelin is O-decanoylated. Highest levels in stomach and anterior intestine. Lower levels in posterior intestine, kidney and brain. Low levels in heart, head kidney and middle intestine.

The protein localises to the secreted. Its function is as follows. Ligand for growth hormone secretagogue receptor type 1 (GHSR). Induces the release of growth hormone from the pituitary. Has an appetite-stimulating effect, induces adiposity and stimulates gastric acid secretion. Involved in growth regulation. The chain is Ghrelin (ghrl) from Anguilla japonica (Japanese eel).